A 71-amino-acid chain; its full sequence is Small ribosomal subunit protein bS21 (71 aa).

Residues 48 to 59 (KAAAAVKRHAKK) show a composition bias toward basic residues. The disordered stretch occupies residues 48-71 (KAAAAVKRHAKKVQRENRKFQRLY). Basic and acidic residues predominate over residues 60-71 (VQRENRKFQRLY).

Belongs to the bacterial ribosomal protein bS21 family.

The sequence is that of Small ribosomal subunit protein bS21 from Saccharophagus degradans (strain 2-40 / ATCC 43961 / DSM 17024).